The primary structure comprises 297 residues: Calponin-1 (297 aa).

In terms of domain architecture, Calponin-homology (CH) spans 28 to 131 (HQREQELREW…STLLALASMA (104 aa)). Calponin-like repeat units follow at residues 164-189 (IGLQ…RHLY), 204-229 (ISLQ…RQIF), and 243-268 (VSLQ…RQVY). Phosphothreonine; by ROCK2 is present on T170. S175 bears the Phosphoserine; by ROCK2 mark. A phosphothreonine; by ROCK2 mark is found at T180 and T184. T259 bears the Phosphothreonine; by ROCK2 mark.

This sequence belongs to the calponin family. Part of cGMP kinase signaling complex at least composed of ACTA2/alpha-actin, CNN1/calponin H1, PLN/phospholamban, PRKG1 and ITPR1.

Its function is as follows. Thin filament-associated protein that is implicated in the regulation and modulation of smooth muscle contraction. It is capable of binding to actin, calmodulin and tropomyosin. The interaction of calponin with actin inhibits the actomyosin Mg-ATPase activity. In Ovis aries (Sheep), this protein is Calponin-1 (CNN1).